Here is a 79-residue protein sequence, read N- to C-terminus: Probable [Fe-S]-dependent transcriptional repressor (79 aa).

Residues cysteine 56, cysteine 61, cysteine 64, and cysteine 71 each coordinate iron-sulfur cluster.

The protein belongs to the FeoC family.

Functionally, may function as a transcriptional regulator that controls feoABC expression. The polypeptide is Probable [Fe-S]-dependent transcriptional repressor (Klebsiella pneumoniae (strain 342)).